The following is a 271-amino-acid chain: DNA repair protein RecO (271 aa).

This sequence belongs to the RecO family.

Involved in DNA repair and RecF pathway recombination. This Synechococcus sp. (strain CC9311) protein is DNA repair protein RecO.